We begin with the raw amino-acid sequence, 246 residues long: Uridylate kinase (246 aa).

Residue 20–23 (KISG) coordinates ATP. Positions 28 to 33 (GDQGYG) are involved in allosteric activation by GTP. A UMP-binding site is contributed by Gly62. ATP contacts are provided by Gly63 and Arg67. UMP contacts are provided by residues Asp82 and 143 to 150 (TGNPYFTT). Positions 170, 176, and 179 each coordinate ATP.

It belongs to the UMP kinase family. In terms of assembly, homohexamer.

The protein localises to the cytoplasm. The catalysed reaction is UMP + ATP = UDP + ADP. Its pathway is pyrimidine metabolism; CTP biosynthesis via de novo pathway; UDP from UMP (UMPK route): step 1/1. With respect to regulation, allosterically activated by GTP. Inhibited by UTP. In terms of biological role, catalyzes the reversible phosphorylation of UMP to UDP. This chain is Uridylate kinase, found in Cereibacter sphaeroides (strain ATCC 17023 / DSM 158 / JCM 6121 / CCUG 31486 / LMG 2827 / NBRC 12203 / NCIMB 8253 / ATH 2.4.1.) (Rhodobacter sphaeroides).